The chain runs to 532 residues: Flavin-containing monooxygenase 3 (532 aa).

FAD-binding positions include 9–13, E32, 40–41, and 61–62; these read GAGVS, LW, and NS. Residues 60–61 and 195–198 contribute to the NADP(+) site; these read SN and SGCD. S401 carries the post-translational modification Phosphoserine. The chain crosses the membrane as a helical span at residues 510-530; it reads FFFHWLKLFAIPILLIAVFLV.

It belongs to the FMO family. It depends on FAD as a cofactor. Liver.

The protein resides in the microsome membrane. The protein localises to the endoplasmic reticulum membrane. It catalyses the reaction trimethylamine + NADPH + O2 = trimethylamine N-oxide + NADP(+) + H2O. The catalysed reaction is N,N-dimethylaniline + NADPH + O2 + H(+) = N,N-dimethylaniline N-oxide + NADP(+) + H2O. The enzyme catalyses hypotaurine + NADPH + O2 + H(+) = taurine + NADP(+) + H2O. It carries out the reaction (S)-nicotine + NADPH + O2 = trans-(S)-nicotine N(1')-oxide + NADP(+) + H2O. It catalyses the reaction albendazole + NADPH + O2 + H(+) = albendazole S-oxide + NADP(+) + H2O. Its function is as follows. Essential hepatic enzyme that catalyzes the oxygenation of a wide variety of nitrogen- and sulfur-containing compounds including drugs as well as dietary compounds. Plays an important role in the metabolism of trimethylamine (TMA), via the production of trimethylamine N-oxide (TMAO) metabolite. TMA is generated by the action of gut microbiota using dietary precursors such as choline, choline containing compounds, betaine or L-carnitine. By regulating TMAO concentration, FMO3 directly impacts both platelet responsiveness and rate of thrombus formation. In Homo sapiens (Human), this protein is Flavin-containing monooxygenase 3 (FMO3).